Reading from the N-terminus, the 101-residue chain is Cilia- and flagella-associated protein 141 (101 aa).

In terms of assembly, microtubule inner protein component of sperm flagellar doublet microtubules. Expressed in trachea multiciliated cells.

The protein localises to the cytoplasm. It localises to the cytoskeleton. Its subcellular location is the cilium axoneme. It is found in the flagellum axoneme. Its function is as follows. Microtubule inner protein (MIP) part of the dynein-decorated doublet microtubules (DMTs) in cilia axoneme, which is required for motile cilia beating. This is Cilia- and flagella-associated protein 141 from Bos taurus (Bovine).